The chain runs to 371 residues: Queuine tRNA-ribosyltransferase (371 aa).

The Proton acceptor role is filled by Asp-90. Residues 90–94 (DSGGF), Asp-144, Gln-189, and Gly-215 each bind substrate. The interval 246 to 252 (GVGTPEN) is RNA binding. Asp-265 acts as the Nucleophile in catalysis. The RNA binding; important for wobble base 34 recognition stretch occupies residues 270-274 (TRNAR). Zn(2+) contacts are provided by Cys-303, Cys-305, Cys-308, and His-334.

The protein belongs to the queuine tRNA-ribosyltransferase family. Homodimer. Within each dimer, one monomer is responsible for RNA recognition and catalysis, while the other monomer binds to the replacement base PreQ1. Zn(2+) serves as cofactor.

It carries out the reaction 7-aminomethyl-7-carbaguanine + guanosine(34) in tRNA = 7-aminomethyl-7-carbaguanosine(34) in tRNA + guanine. The protein operates within tRNA modification; tRNA-queuosine biosynthesis. Its function is as follows. Catalyzes the base-exchange of a guanine (G) residue with the queuine precursor 7-aminomethyl-7-deazaguanine (PreQ1) at position 34 (anticodon wobble position) in tRNAs with GU(N) anticodons (tRNA-Asp, -Asn, -His and -Tyr). Catalysis occurs through a double-displacement mechanism. The nucleophile active site attacks the C1' of nucleotide 34 to detach the guanine base from the RNA, forming a covalent enzyme-RNA intermediate. The proton acceptor active site deprotonates the incoming PreQ1, allowing a nucleophilic attack on the C1' of the ribose to form the product. After dissociation, two additional enzymatic reactions on the tRNA convert PreQ1 to queuine (Q), resulting in the hypermodified nucleoside queuosine (7-(((4,5-cis-dihydroxy-2-cyclopenten-1-yl)amino)methyl)-7-deazaguanosine). This chain is Queuine tRNA-ribosyltransferase, found in Helicobacter pylori (strain Shi470).